An 815-amino-acid chain; its full sequence is Phosphate transporter PHO1-2 (815 aa).

The Cytoplasmic portion of the chain corresponds to 1–421 (MVKFSREYEA…QQPRNTHMIT (421 aa)). The 367-residue stretch at 2-368 (VKFSREYEAS…EQQRATDLFS (367 aa)) folds into the SPX domain. Disordered stretches follow at residues 83 to 108 (SAGQ…STDK), 166 to 213 (RGLA…LELQ), and 242 to 266 (AGKK…GGGG). Residues 97-108 (PDRGELVRSTDK) show a composition bias toward basic and acidic residues. The span at 183 to 201 (PPSSVHGSSGRYLLSGLSS) shows a compositional bias: low complexity. Positions 202–213 (PQSMSDGSLELQ) are enriched in polar residues. Over residues 243 to 254 (GKKDGKTKDGSG) the composition is skewed to basic and acidic residues. Over residues 255 to 266 (KGRGGGGGGGGG) the composition is skewed to gly residues. The helical transmembrane segment at 422–442 (FLVGLFTGTFVSLFIIYAILA) threads the bilayer. At 443–458 (HVSGIFTSTGNSAYME) the chain is on the extracellular side. The helical transmembrane segment at 459–479 (IVYHVFSMFALISLHIFLYGC) threads the bilayer. Over 480–508 (NLFMWKNTRINHNFIFDFSSNTALTHRDA) the chain is Cytoplasmic. Residues 509–529 (FLMSASIMCTVVAALVINLFL) form a helical membrane-spanning segment. Over 530 to 538 (KNAGVAYAN) the chain is Extracellular. A helical transmembrane segment spans residues 539–559 (ALPGALLLLSTGVLFCPFDIF). At 560 to 686 (YRSTRYCFMR…VRFKYAATPT (127 aa)) the chain is on the cytoplasmic side. The 192-residue stretch at 624–815 (TSGQQYKHLA…PLPFRELETD (192 aa)) folds into the EXS domain. The helical transmembrane segment at 687–707 (PFWVWMVIISSSGATIYQLYW) threads the bilayer. Residues 708–734 (DFVKDWGFLNPKSKNRWLRNELILKNK) lie on the Extracellular side of the membrane. The chain crosses the membrane as a helical span at residues 735-751 (SIYYVSMMLNLALRLAW). Residues 752–815 (TESVMKIHIG…PLPFRELETD (64 aa)) lie on the Cytoplasmic side of the membrane.

This sequence belongs to the SYG1 (TC 2.A.94) family. Specifically expressed in roots.

The protein localises to the cell membrane. In terms of biological role, involved in the transfer of inorganic phosphate (Pi) from roots to shoots. This Oryza sativa subsp. japonica (Rice) protein is Phosphate transporter PHO1-2 (PHO1-2).